The sequence spans 1476 residues: Coiled-coil domain-containing protein 88B (1476 aa).

Residues 253-481 (SHHLALQLAN…RGLLQVLQGQ (229 aa)) adopt a coiled-coil conformation. Disordered regions lie at residues 427–451 (QRSLEPPPGSPGEAPLAGAAPSLQD), 509–706 (VAFD…EGAL), 825–866 (RRQW…ERRE), and 1323–1476 (LMRP…SLSQ). Residue serine 436 is modified to Phosphoserine. Polar residues predominate over residues 572 to 586 (SDWSPQESGSPVETQ). Serine 596 is subject to Phosphoserine. Composition is skewed to basic and acidic residues over residues 678-690 (EAREHDQRLEGTV), 825-834 (RRQWEREGSR), and 842-866 (AEERMQVLESEGRQHLEEAERERRE). A coiled-coil region spans residues 720-1303 (LASGVAEQEA…KIMDQYRVLE (584 aa)). 2 positions are modified to phosphoserine: serine 1348 and serine 1379. Positions 1448 to 1469 (LQEHETDANREGPEVQEPEKRP) are enriched in basic and acidic residues.

Belongs to the CCDC88 family. As to quaternary structure, homodimer. Interacts with DOCK8. Interacts (via C-terminus) with intact microtubules. Interacts with dynein-dynactin motor complex. Interacts (via C-terminus) with HSPA5. Expressed in endothelium (at protein level). Expressed in NK cells (at protein level).

It localises to the membrane. The protein localises to the cytoplasm. It is found in the cytoskeleton. Its subcellular location is the microtubule organizing center. The protein resides in the endoplasmic reticulum. It localises to the golgi apparatus. Its function is as follows. Acts as a positive regulator of T-cell maturation and inflammatory function. Required for several functions of T-cells, in both the CD4(+) and the CD8(+) compartments and this includes expression of cell surface markers of activation, proliferation, and cytokine production in response to specific or non-specific stimulation. Enhances NK cell cytotoxicity by positively regulating polarization of microtubule-organizing center (MTOC) to cytotoxic synapse, lytic granule transport along microtubules, and dynein-mediated clustering to MTOC. Interacts with HSPA5 and stabilizes the interaction between HSPA5 and ERN1, leading to suppression of ERN1-induced JNK activation and endoplasmic reticulum stress-induced apoptosis. This chain is Coiled-coil domain-containing protein 88B (CCDC88B), found in Homo sapiens (Human).